The sequence spans 285 residues: HTH-type transcriptional regulator MurR (285 aa).

Residues 1 to 77 (MLYLTKIRNA…MALIGEYSAS (77 aa)) form the HTH rpiR-type domain. Residues 37 to 56 (SRKMAKLLGISQSSIVKFAQ) constitute a DNA-binding region (H-T-H motif). Residues 128–268 (IIEAISKAPF…FVGLVQLNDV (141 aa)) form the SIS domain.

Homotetramer.

It functions in the pathway amino-sugar metabolism; N-acetylmuramate degradation [regulation]. Represses the expression of the murPQ operon involved in the uptake and degradation of N-acetylmuramic acid (MurNAc). Binds to two adjacent inverted repeats within the operator region. MurNAc 6-phosphate, the substrate of MurQ, is the specific inducer that weakens binding of MurR to the operator. This chain is HTH-type transcriptional regulator MurR, found in Escherichia coli O17:K52:H18 (strain UMN026 / ExPEC).